We begin with the raw amino-acid sequence, 358 residues long: Na(+)/H(+) exchange regulatory cofactor NHE-RF1 (358 aa).

Position 2 is an N-acetylserine (Ser-2). Phosphoserine occurs at positions 2 and 46. A PDZ 1 domain is found at 14-94 (LCCLEKGPNG…AVRLLVVDPE (81 aa)). Over residues 114–134 (QETPGQAEPAAAAEAQGAGNE) the composition is skewed to low complexity. Disordered regions lie at residues 114–192 (QETP…EASG) and 269–358 (SREA…FSNL). Basic and acidic residues predominate over residues 135 to 149 (NEPREADKSHPEQRK). Residues 154–234 (LCTMKKGPSG…ETKLLVVDRE (81 aa)) form the PDZ 2 domain. Phosphoserine occurs at positions 162, 269, 280, 290, and 291. Positions 287-306 (RSASSDTSEELNSQDSPPKQ) are enriched in polar residues. Thr-293 carries the phosphothreonine modification. Phosphoserine occurs at positions 294, 299, and 302. The span at 307-319 (DSTAPSSTSSSDP) shows a compositional bias: low complexity. The span at 348-358 (WSKKNELFSNL) shows a compositional bias: basic and acidic residues.

Homodimer, and heterodimer with NHERF2. Binds the N-termini of EZR, RDX and MSN. Binds the C-termini of PDGFRA, PDGFRB, ADRB2, NOS2 and CFTR. Binds ARHGAP17, EPI64, RACK1, OPRK1, GNAQ, CTNNB1 and PLCB3. Binds PDZK1. Interacts with CLCN3. Binds the C-terminus of PAG1. In resting T-cells, part of a PAG1-NHERF1-MSN complex which is disrupted upon TCR activation. Forms a complex with CFTR and SLC4A7. Forms a complex with SLC4A7 and ATP6V1B1. Interacts with TRPC4 (via the PDZ-binding domain). Directly interacts with HTR4. Interacts (via the PDZ 1 domain) with PODXL (via the C-terminal PDZ-binding motif DTHL); interaction is not detected in glomerular epithelium cells. Interacts (via the PDZ 1 domain) with PODXL (via the C-terminal PDZ-binding motif DTHL); the interaction take place early in the secretory pathway and is necessary for its apical membrane sorting. Interacts with SLC26A3. Interacts with MCC. Interacts with SLC34A1. Interacts (via the PDZ domains) with SLC26A6 isoform 4 and isoform 5. Interacts (via PDZ domains) with ACE2 (via PDZ-binding motif); the interaction may enhance ACE2 membrane residence. In terms of processing, phosphorylated on serine residues.

The protein localises to the cytoplasm. The protein resides in the apical cell membrane. It localises to the endomembrane system. It is found in the cell projection. Its subcellular location is the filopodium. The protein localises to the ruffle. The protein resides in the microvillus. Scaffold protein that connects plasma membrane proteins with members of the ezrin/moesin/radixin family and thereby helps to link them to the actin cytoskeleton and to regulate their surface expression. Necessary for recycling of internalized ADRB2. Was first known to play a role in the regulation of the activity and subcellular location of SLC9A3. Necessary for cAMP-mediated phosphorylation and inhibition of SLC9A3. Involved in sperm capacitation. May participate in the regulation of the chloride and bicarbonate homeostasis in spermatozoa. May enhance Wnt signaling. May participate in HTR4 targeting to microvilli. Involved in the regulation of phosphate reabsorption in the renal proximal tubules. In Macaca fascicularis (Crab-eating macaque), this protein is Na(+)/H(+) exchange regulatory cofactor NHE-RF1 (NHERF1).